The following is a 319-amino-acid chain: CCAAT/enhancer-binding protein homolog 1 (319 aa).

Residues 53–67 (SLTIAASLQQRDRER) form a n' domain; required for axon regeneration region. Positions 163–319 (TRRAVKRPVP…QRHILENFNK (157 aa)) are disordered. Residues 171 to 181 (VPYDDYQKEYS) are compositionally biased toward basic and acidic residues. Residues 182–198 (EESSDMTDNDGSVDDSY) show a composition bias toward acidic residues. Basic and acidic residues-rich tracts occupy residues 225–248 (LKADEEKAEPTYKLKRARNNDAVR), 255–274 (KELQDKKEAEHDKMKRRIAE), 281–291 (SERDARRRDQD), and 302–319 (PMKEQRMPQRHILENFNK). A bZIP domain is found at 233 to 308 (EPTYKLKRAR…NKGPMKEQRM (76 aa)). A basic motif region spans residues 237 to 271 (KLKRARNNDAVRKSRKKAKELQDKKEAEHDKMKRR). Residues 275-308 (LEGLLQSERDARRRDQDTLEQLLRNKGPMKEQRM) form a leucine-zipper region.

It belongs to the bZIP family. C/EBP subfamily. In terms of assembly, may interact with transcription factor ets-4. May interact (via N-terminus) with nipi-3. May interact (via N-terminus) with importin subunit alpha ima-3. In terms of tissue distribution, expressed in touch and motor neurons.

The protein localises to the synapse. The protein resides in the cytoplasm. Its subcellular location is the nucleus. It localises to the cell projection. It is found in the axon. Functionally, transcription factor. Binds to promoter regions of target genes, perhaps at the motif 5'-[AGCT]TT[AGT][TC]GAAA[ACT]-3'. Modulates expression of genes involved in development and in stress responses, including those regulating the p38/MAPK signaling pathways such as MAPKK sek-1 and phosphatase vhp-1. Involved in innate immunity. Plays a role in repressing the response to infection by the Gram-negative bacterium P.aeruginosa, perhaps acting independently of the pmk-1 or pmk-3 p38/MAPK pathways. However, also plays a protective role in the response to infection by P.aeruginosa. Required in axonal regrowth following injury and synaptogenesis. Following axon injury, in concert with transcription factor ets-4, activates expression of receptor tyrosine kinase svh-2. May function downstream of the Ca2+-activated p38/MAPK pathway to promote axon regeneration. Plays a role in modulating polymerization of neuronal microtubules. Involved in modulating lipid homeostasis. In Caenorhabditis elegans, this protein is CCAAT/enhancer-binding protein homolog 1.